Reading from the N-terminus, the 775-residue chain is Dipeptidyl peptidase 4 (775 aa).

Residues 1 to 15 (MKLLSLLMLAGIAQA) form the signal peptide. Asn-81, Asn-111, Asn-154, and Asn-219 each carry an N-linked (GlcNAc...) asparagine glycan. Active-site charge relay system residues include Ser-613, Asp-690, and His-725.

The protein belongs to the peptidase S9B family.

It is found in the secreted. The catalysed reaction is Release of an N-terminal dipeptide, Xaa-Yaa-|-Zaa-, from a polypeptide, preferentially when Yaa is Pro, provided Zaa is neither Pro nor hydroxyproline.. In terms of biological role, extracellular dipeptidyl-peptidase which removes N-terminal dipeptides sequentially from polypeptides having unsubstituted N-termini provided that the penultimate residue is proline. Contributes to pathogenicity. This chain is Dipeptidyl peptidase 4 (DPP4), found in Trichophyton rubrum (Athlete's foot fungus).